The following is a 329-amino-acid chain: Ferredoxin--NADP reductase 2 (329 aa).

FAD contacts are provided by Thr-18, Glu-37, Gln-45, Tyr-50, Val-90, Phe-124, Asp-285, and Ser-326.

This sequence belongs to the ferredoxin--NADP reductase type 2 family. Homodimer. It depends on FAD as a cofactor.

It carries out the reaction 2 reduced [2Fe-2S]-[ferredoxin] + NADP(+) + H(+) = 2 oxidized [2Fe-2S]-[ferredoxin] + NADPH. The polypeptide is Ferredoxin--NADP reductase 2 (Bacillus cytotoxicus (strain DSM 22905 / CIP 110041 / 391-98 / NVH 391-98)).